The primary structure comprises 400 residues: Polyadenylate-binding protein-interacting protein 1 (400 aa).

Residues 1–10 are compositionally biased toward basic and acidic residues; it reads MSDSFDRAPE. A disordered region spans residues 1–36; the sequence is MSDSFDRAPEQTKPQRAPPSSQDKIPQQNSESAMAK. A compositionally biased stretch (polar residues) spans 12–32; the sequence is TKPQRAPPSSQDKIPQQNSES. The interval 37–64 is PABPC1-interacting motif-2 (PAM2); that stretch reads PQVVVAPVLMSKLSANAPEFYPSGYSSN. The segment at 78-296 is PAIP1 middle domain (PAIP1M); it reads TLSEYVQDFL…LLKLVELRSS (219 aa). Positions 80-297 constitute an MIF4G domain; the sequence is SEYVQDFLNH…LKLVELRSSN (218 aa). The interval 356–376 is disordered; the sequence is DYEENGTDLSGAGDPYLDDID. Positions 361-400 are PABPC1-interacting motif-1 (PAM1); the sequence is GTDLSGAGDPYLDDIDDEMDPEIEEAYEKFCLESERKRKQ.

In terms of assembly, interacts with the RRM1-RRM2 and C-terminus regions of PABPC1 in a 1:1 stoichiometry. Interacts with EIF4A.

It is found in the cytoplasm. In terms of biological role, acts as a coactivator in the regulation of translation initiation of poly(A)-containing mRNAs. Its stimulatory activity on translation is mediated via its action on PABPC1. Competes with PAIP2 for binding to PABPC1. Its association with EIF4A and PABPC1 may potentiate contacts between mRNA termini. May also be involved in translationally coupled mRNA turnover. Implicated with other RNA-binding proteins in the cytoplasmic deadenylation/translational and decay interplay of the FOS mRNA mediated by the major coding-region determinant of instability (mCRD) domain. This is Polyadenylate-binding protein-interacting protein 1 (Paip1) from Mus musculus (Mouse).